The chain runs to 178 residues: Ribosome maturation factor RimP (178 aa).

This sequence belongs to the RimP family.

The protein localises to the cytoplasm. Its function is as follows. Required for maturation of 30S ribosomal subunits. The sequence is that of Ribosome maturation factor RimP from Cutibacterium acnes (strain DSM 16379 / KPA171202) (Propionibacterium acnes).